Here is a 137-residue protein sequence, read N- to C-terminus: MPTTNQLVVNGRENKVRKQNAPALNLSFNTLTKSARKLPAPFKRGVCTRVATMTPKKPNSASRKYARVKLSNGMEITAYIGGEGHNLQEHSVVLIRGGRVKDLPGVRYHIVRGTQDLAGVANRKQGRSLYGAKKEKK.

Asp-102 bears the 3-methylthioaspartic acid mark.

This sequence belongs to the universal ribosomal protein uS12 family. Part of the 30S ribosomal subunit. Contacts proteins S8 and S17. May interact with IF1 in the 30S initiation complex.

In terms of biological role, with S4 and S5 plays an important role in translational accuracy. Interacts with and stabilizes bases of the 16S rRNA that are involved in tRNA selection in the A site and with the mRNA backbone. Located at the interface of the 30S and 50S subunits, it traverses the body of the 30S subunit contacting proteins on the other side and probably holding the rRNA structure together. The combined cluster of proteins S8, S12 and S17 appears to hold together the shoulder and platform of the 30S subunit. The chain is Small ribosomal subunit protein uS12 from Mycoplasmopsis agalactiae (strain NCTC 10123 / CIP 59.7 / PG2) (Mycoplasma agalactiae).